The chain runs to 424 residues: Glutamate-1-semialdehyde 2,1-aminomutase (424 aa).

Lys-258 is subject to N6-(pyridoxal phosphate)lysine.

It belongs to the class-III pyridoxal-phosphate-dependent aminotransferase family. HemL subfamily. Pyridoxal 5'-phosphate serves as cofactor.

The protein resides in the cytoplasm. The enzyme catalyses (S)-4-amino-5-oxopentanoate = 5-aminolevulinate. It functions in the pathway porphyrin-containing compound metabolism; protoporphyrin-IX biosynthesis; 5-aminolevulinate from L-glutamyl-tRNA(Glu): step 2/2. The chain is Glutamate-1-semialdehyde 2,1-aminomutase from Pyrobaculum neutrophilum (strain DSM 2338 / JCM 9278 / NBRC 100436 / V24Sta) (Thermoproteus neutrophilus).